A 397-amino-acid polypeptide reads, in one-letter code: MGSFDEVSHDTGYEDYITFLKRRIRQLELQVRTLEADKERLERELSRLRTEMSRLRQPPAFAGTVIEVLDDDRAIVQNYNGPRFVVRIAPWIERDKLKPGSRVALDQRTMAIVELLPTEKDPSVLGFEVIEKPRVTYQDIGGLERQLAELREAVELPLKHPELFEKVGIEPPKGVLLYGPPGCGKTLMAKAVANHVNATFIRVVGSELVRKFIGEGARLVHELFEMAKEKAPTIIFIDEIDAIGAKRMDETTGGEREVNRTLMQLLAEMDGFDPRGNVKVIAATNRPDILDPALLRPGRFDRLIEVPLPDFRGRLEILKVHTRKMNLRNVDLSIIADITEGASGADLKAIATEAGMFAIRDRRTYVTQEDFLKAVDKVLGAEKRLAQAIAMHEVMYG.

Residues 12-58 (GYEDYITFLKRRIRQLELQVRTLEADKERLERELSRLRTEMSRLRQP) adopt a coiled-coil conformation. ATP contacts are provided by residues 182-187 (GCGKTL) and His321. The segment at 395 to 397 (MYG) is docks into pockets in the proteasome alpha-ring to cause gate opening.

Belongs to the AAA ATPase family. In terms of assembly, homohexamer. The hexameric complex has a two-ring architecture resembling a top hat that caps the 20S proteasome core at one or both ends. Upon ATP-binding, the C-terminus of PAN interacts with the alpha-rings of the proteasome core by binding to the intersubunit pockets.

It localises to the cytoplasm. In terms of biological role, ATPase which is responsible for recognizing, binding, unfolding and translocation of substrate proteins into the archaeal 20S proteasome core particle. Is essential for opening the gate of the 20S proteasome via an interaction with its C-terminus, thereby allowing substrate entry and access to the site of proteolysis. Thus, the C-termini of the proteasomal ATPase function like a 'key in a lock' to induce gate opening and therefore regulate proteolysis. Unfolding activity requires energy from ATP hydrolysis, whereas ATP binding alone promotes ATPase-20S proteasome association which triggers gate opening, and supports translocation of unfolded substrates. This is Proteasome-activating nucleotidase from Thermococcus gammatolerans (strain DSM 15229 / JCM 11827 / EJ3).